Consider the following 527-residue polypeptide: Low-affinity Na(+)/H(+) antiporter NhaS1 (527 aa).

11 helical membrane-spanning segments follow: residues 18–38 (FLIVLSVSLSIATLSKTVPIL), 41–61 (IPYTLLLVIVGMALAFVDVKL), 94–114 (WFPITLFATLGVVICVVGIAF), 126–146 (IAFLAAAALSATDPVSVIALF), 169–189 (VAVVVFLILVGIPLGTSTFDL), 196–216 (FVTVIGIGVGCGLVIGFSLSL), 240–260 (ILAENLGGSGVIGVVVVGMVL), 276–296 (IVSIFWEFVAFFVNSIIFLLI), 311–331 (LILIAIAAVVVTRLVSVFGLS), 352–372 (TVLWWGGLRGSVAIAVALSVP), and 380–400 (AIIDIVFGVVLFTLLVQGLTT).

Belongs to the monovalent cation:proton antiporter 1 (CPA1) transporter (TC 2.A.36) family.

Its subcellular location is the cell membrane. Na(+)/H(+) antiporter that extrudes sodium in exchange for external protons. Might be able to function at relatively high concentrations of Na(+) ions. Also has Li(+)/H(+) antiport activity under K(+)-rich conditions, but it might not have any physiological relevance. The polypeptide is Low-affinity Na(+)/H(+) antiporter NhaS1 (nhaS1) (Synechocystis sp. (strain ATCC 27184 / PCC 6803 / Kazusa)).